Reading from the N-terminus, the 252-residue chain is Imidazole glycerol phosphate synthase subunit HisF (252 aa).

Residues Asp-11 and Asp-130 contribute to the active site.

The protein belongs to the HisA/HisF family. Heterodimer of HisH and HisF.

The protein localises to the cytoplasm. It catalyses the reaction 5-[(5-phospho-1-deoxy-D-ribulos-1-ylimino)methylamino]-1-(5-phospho-beta-D-ribosyl)imidazole-4-carboxamide + L-glutamine = D-erythro-1-(imidazol-4-yl)glycerol 3-phosphate + 5-amino-1-(5-phospho-beta-D-ribosyl)imidazole-4-carboxamide + L-glutamate + H(+). Its pathway is amino-acid biosynthesis; L-histidine biosynthesis; L-histidine from 5-phospho-alpha-D-ribose 1-diphosphate: step 5/9. Functionally, IGPS catalyzes the conversion of PRFAR and glutamine to IGP, AICAR and glutamate. The HisF subunit catalyzes the cyclization activity that produces IGP and AICAR from PRFAR using the ammonia provided by the HisH subunit. The polypeptide is Imidazole glycerol phosphate synthase subunit HisF (Streptococcus gordonii (strain Challis / ATCC 35105 / BCRC 15272 / CH1 / DL1 / V288)).